The chain runs to 132 residues: Small ribosomal subunit protein uS8 (132 aa).

Belongs to the universal ribosomal protein uS8 family. As to quaternary structure, part of the 30S ribosomal subunit. Contacts proteins S5 and S12.

In terms of biological role, one of the primary rRNA binding proteins, it binds directly to 16S rRNA central domain where it helps coordinate assembly of the platform of the 30S subunit. This chain is Small ribosomal subunit protein uS8, found in Kineococcus radiotolerans (strain ATCC BAA-149 / DSM 14245 / SRS30216).